The primary structure comprises 1075 residues: Ataxin-2-like protein (1075 aa).

N-acetylmethionine is present on M1. Residues 1 to 12 are compositionally biased toward low complexity; the sequence is MLKPQPLQQPSQ. Residues 1–115 are disordered; that stretch reads MLKPQPLQQP…KGPPQSPVFE (115 aa). Positions 98–121 are interaction with MPL; sequence SARGQSTGKGPPQSPVFEGVYNNS. Phosphoserine is present on residues S103 and S111. Position 118 is a phosphotyrosine (Y118). The region spanning 122 to 199 is the Sm domain; sequence RMLHFLTAVV…VMLVHFRNVD (78 aa). K207 carries the post-translational modification N6-acetyllysine. At S238 the chain carries Phosphoserine. Y264 carries the phosphotyrosine modification. Position 306 is a phosphoserine (S306). Residue Y309 is modified to Phosphotyrosine. The segment covering 316–328 has biased composition (basic and acidic residues); the sequence is ENDDGRTEEEKHS. 6 disordered regions span residues 316 to 521, 551 to 697, 733 to 770, 820 to 849, 865 to 940, and 1022 to 1045; these read ENDD…LEPQ, QFKL…SIPV, VSNSVPGQQGKYRGAKGSLPPQRSDQHQPASAPPMMQA, SNPRMLTSGSHPQAIVSSSTPQYPSAEQPT, ATQL…SSFP, and PYIGHPQGEQPGQAPGFPGGADDR. Positions 330–342 are enriched in polar residues; the sequence is VQRQGSGRESPSL. S335 and S339 each carry phosphoserine. A Glycyl lysine isopeptide (Lys-Gly) (interchain with G-Cter in SUMO2) cross-link involves residue K348. Y349 carries the phosphotyrosine modification. The residue at position 361 (R361) is an Asymmetric dimethylarginine. The segment covering 363 to 380 has biased composition (low complexity); that stretch reads GVRCSSSRGGRPGLSSLP. Phosphoserine is present on residues S391 and S409. Over residues 421–433 the composition is skewed to polar residues; sequence TLSSPSNRPSGET. S449 is subject to Phosphoserine. Low complexity-rich tracts occupy residues 450-462 and 471-485; these read PKSAAPAPISASC and VPTSSASIPVTSSVS. A phosphoserine mark is found at S493 and S496. Residues 505–516 show a composition bias toward basic and acidic residues; sequence DVKELSTKEPGR. S557, S558, S559, and S563 each carry phosphoserine. The segment covering 571–584 has biased composition (basic and acidic residues); the sequence is ILKEEPKGKEKEVD. A Phosphoserine modification is found at S594. At T632 the chain carries Phosphothreonine. Phosphoserine occurs at positions 634, 674, 680, and 684. Low complexity-rich tracts occupy residues 678–694 and 761–770; these read STSTPTSPGPRTHSTPS and PASAPPMMQA. Polar residues predominate over residues 874-898; it reads QPATTPTGSQPQSQHAAPSPVQHQA. Composition is skewed to low complexity over residues 931–940 and 1025–1037; these read SAQSPQSSFP and GHPQGEQPGQAPG.

The protein belongs to the ataxin-2 family. Interacts with MPL/TPOR and EPOR and dissociates after ligand stimulation. Interacts with DDX6, G3BP1, and ATXN2. Interacts with PRMT1. Interacts with CIC and ATXN1. Post-translationally, thrombopoietin triggers the phosphorylation on tyrosine residues in a way that is dependent on MPL C-terminal domain. In terms of processing, asymmetrically dimethylated. Probably methylated by PRMT1. As to expression, expressed at high levels in thymus, lymph node, spleen, fetal kidney and adult testis. Constitutively associated with MPL and EPOR in hematopoietic cells.

The protein localises to the membrane. It localises to the cytoplasm. Its subcellular location is the nucleus speckle. It is found in the cytoplasmic granule. Functionally, involved in the regulation of stress granule and P-body formation. The sequence is that of Ataxin-2-like protein (ATXN2L) from Homo sapiens (Human).